An 80-amino-acid chain; its full sequence is ATP synthase F(1) complex subunit delta, mitochondrial (80 aa).

The transit peptide at 1 to 22 (MLPATLLRXSGLGRVVRQARAY) directs the protein to the mitochondrion.

The protein belongs to the ATPase epsilon chain family. In terms of assembly, component of the ATP synthase complex composed at least of ATP5F1A/subunit alpha, ATP5F1B/subunit beta, ATP5MC1/subunit c (homooctomer), MT-ATP6/subunit a, MT-ATP8/subunit 8, ATP5ME/subunit e, ATP5MF/subunit f, ATP5MG/subunit g, ATP5MK/subunit k, ATP5MJ/subunit j, ATP5F1C/subunit gamma, ATP5F1D/subunit delta, ATP5F1E/subunit epsilon, ATP5PF/subunit F6, ATP5PB/subunit b, ATP5PD/subunit d, ATP5PO/subunit OSCP. ATP synthase complex consists of a soluble F(1) head domain (subunits alpha(3) and beta(3)) - the catalytic core - and a membrane F(0) domain - the membrane proton channel (subunits c, a, 8, e, f, g, k and j). These two domains are linked by a central stalk (subunits gamma, delta, and epsilon) rotating inside the F1 region and a stationary peripheral stalk (subunits F6, b, d, and OSCP). Component of a complex composed at least by ATPIF1, ATP5F1A, ATP5F1B, ATP5F1C AND ATP5F1E.

It localises to the mitochondrion. The protein resides in the mitochondrion inner membrane. Subunit delta, of the mitochondrial membrane ATP synthase complex (F(1)F(0) ATP synthase or Complex V) that produces ATP from ADP in the presence of a proton gradient across the membrane which is generated by electron transport complexes of the respiratory chain. ATP synthase complex consist of a soluble F(1) head domain - the catalytic core - and a membrane F(1) domain - the membrane proton channel. These two domains are linked by a central stalk rotating inside the F(1) region and a stationary peripheral stalk. During catalysis, ATP synthesis in the catalytic domain of F(1) is coupled via a rotary mechanism of the central stalk subunits to proton translocation. In vivo, can only synthesize ATP although its ATP hydrolase activity can be activated artificially in vitro. With the central stalk subunit gamma, is essential for the biogenesis of F(1) catalytic part of the ATP synthase complex namely in the formation of F1 assembly intermediate. The polypeptide is ATP synthase F(1) complex subunit delta, mitochondrial (Sus scrofa (Pig)).